Reading from the N-terminus, the 378-residue chain is D-galactarolactone cycloisomerase (378 aa).

Mg(2+) contacts are provided by Asp-194, Glu-220, and Glu-246. Residue His-296 is the Proton acceptor of the active site.

It belongs to the mandelate racemase/muconate lactonizing enzyme family. As to quaternary structure, homooctamer. The cofactor is Mg(2+).

It catalyses the reaction D-glucaro-1,4-lactone = 5-dehydro-4-deoxy-D-glucarate + H(+). The enzyme catalyses D-galactaro-1,4-lactone = 5-dehydro-4-deoxy-D-glucarate + H(+). It functions in the pathway carbohydrate acid metabolism; D-galacturonate degradation via prokaryotic oxidative pathway. Functionally, catalyzes the ring opening of D-galactaro-1,4-lactone to yield 5-keto-4-deoxy-D-glucarate (KDG) via a beta-elimination reaction. This is a step in the oxidative degradation pathway of D-galacturonate, which allows A.tumefaciens to utilize D-galacturonate as a sole carbon source. To a lesser extent, can also use D-glucaro-1,4-lactone as substrate to produce KDG, but cannot use D-galactaro-1,5-lactone, D-glucaro-6,3-lactone and linear D-glucarate. The chain is D-galactarolactone cycloisomerase (gci) from Agrobacterium fabrum (strain C58 / ATCC 33970) (Agrobacterium tumefaciens (strain C58)).